The chain runs to 343 residues: Protein RecA (343 aa).

66–73 is a binding site for ATP; it reads GPESSGKT. Residues 319 to 343 are disordered; it reads IERQIREKHLPKRSAKADEAESAEA.

Belongs to the RecA family.

It localises to the cytoplasm. Can catalyze the hydrolysis of ATP in the presence of single-stranded DNA, the ATP-dependent uptake of single-stranded DNA by duplex DNA, and the ATP-dependent hybridization of homologous single-stranded DNAs. It interacts with LexA causing its activation and leading to its autocatalytic cleavage. In Thioalkalivibrio sulfidiphilus (strain HL-EbGR7), this protein is Protein RecA.